The sequence spans 827 residues: SH3-containing GRB2-like protein 3-interacting protein 1 (827 aa).

3 disordered regions span residues 1 to 116, 143 to 199, and 223 to 278; these read MMEG…SHKK, IGNI…ALAP, and IWGS…QAAT. Basic and acidic residues-rich tracts occupy residues 16–32 and 40–53; these read RKKE…DRDG and LPYH…REGG. Phosphoserine occurs at positions 78, 104, 105, 107, 149, 151, 156, and 169. A phosphothreonine mark is found at Thr-180 and Thr-182. Residue Ser-236 is modified to Phosphoserine. Positions 245-260 are enriched in pro residues; it reads TGTPPPLPPKTVPATP. 2 positions are modified to phosphothreonine: Thr-247 and Thr-259. Phosphoserine occurs at positions 265, 287, 289, 300, 316, and 319. The span at 265–276 shows a compositional bias: polar residues; the sequence is SPLTVATGNDQA. The disordered stretch occupies residues 315–505; sequence FSDASPEHVT…IAPLARAEST (191 aa). Residues 319–333 show a composition bias toward basic and acidic residues; it reads SPEHVTPELTPREKV. 3 positions are modified to phosphothreonine: Thr-324, Thr-328, and Thr-335. Over residues 335–345 the composition is skewed to low complexity; the sequence is TPPAASDIPAD. Pro residues predominate over residues 346-369; the sequence is SPTPGPPGPPGSAGPPGPPGPRNV. Ser-371 carries the post-translational modification Phosphoserine. Residues 377–392 are compositionally biased toward basic and acidic residues; the sequence is EVQKKVAEQTFIKDDY. Position 398 is a phosphoserine (Ser-398). Residue Thr-409 is modified to Phosphothreonine. Positions 436–455 are enriched in low complexity; sequence ASGASSPARPATPLVPCSCS. The segment covering 456–474 has biased composition (pro residues); the sequence is TPPPPPPRPPSRPKLPPGK. Residues 481–491 show a composition bias toward low complexity; sequence SRPFSPPIHSS. At Ser-485 the chain carries Phosphoserine. The MHD domain occupies 558–826; that stretch reads TLPVAAAFTE…RFAAGKYLAD (269 aa). Interaction with DPF motifs-containing proteins stretches follow at residues 560 to 566, 592 to 594, 666 to 669, and 812 to 817; these read PVAAAFT, SFP, TYYN, and SLIKKR. A necessary and sufficient to mediate interaction with CANX region spans residues 648 to 827; sequence MPNLMTHLKK…FAAGKYLADN (180 aa).

Interacts with proteins essential or regulating the formation of functional clathrin-coated pits. Interacts with CANX. Interacts with AP2A1. Interacts with EPS15. Interacts with SH3GL3. Interacts with AMPH. Interacts with ITSN1 (via SH3 domains). Interacts with and REPS1. In terms of tissue distribution, specifically expressed in brain. Also detected at lower levels in spleen and adipose tissue.

Its subcellular location is the membrane. The protein localises to the clathrin-coated pit. May function in clathrin-mediated endocytosis. Has both a membrane binding/tubulating activity and the ability to recruit proteins essential to the formation of functional clathrin-coated pits. Has a preference for membranes enriched in phosphatidylserine and phosphoinositides and is required for the endocytosis of the transferrin receptor. May also bind tubulin. May play a role in the regulation of energy homeostasis. The protein is SH3-containing GRB2-like protein 3-interacting protein 1 (SGIP1) of Psammomys obesus (Fat sand rat).